A 475-amino-acid polypeptide reads, in one-letter code: Sulfate adenylyltransferase subunit 1 (475 aa).

Positions 25-240 constitute a tr-type G domain; it reads KSLLRFLTCG…VLETVEVINL (216 aa). The interval 34–41 is G1; the sequence is GSVDDGKS. 34-41 serves as a coordination point for GTP; it reads GSVDDGKS. The G2 stretch occupies residues 92 to 96; that stretch reads GITID. The G3 stretch occupies residues 113–116; the sequence is DTPG. Residues 113–117 and 168–171 each bind GTP; these read DTPGH and NKMD. Positions 168–171 are G4; the sequence is NKMD. The segment at 206-208 is G5; sequence SAL.

The protein belongs to the TRAFAC class translation factor GTPase superfamily. Classic translation factor GTPase family. CysN/NodQ subfamily. As to quaternary structure, heterodimer composed of CysD, the smaller subunit, and CysN.

It catalyses the reaction sulfate + ATP + H(+) = adenosine 5'-phosphosulfate + diphosphate. Its pathway is sulfur metabolism; hydrogen sulfide biosynthesis; sulfite from sulfate: step 1/3. With CysD forms the ATP sulfurylase (ATPS) that catalyzes the adenylation of sulfate producing adenosine 5'-phosphosulfate (APS) and diphosphate, the first enzymatic step in sulfur assimilation pathway. APS synthesis involves the formation of a high-energy phosphoric-sulfuric acid anhydride bond driven by GTP hydrolysis by CysN coupled to ATP hydrolysis by CysD. In Sodalis glossinidius (strain morsitans), this protein is Sulfate adenylyltransferase subunit 1.